The sequence spans 463 residues: HEPACAM family member 2 (463 aa).

A signal peptide spans 1–32 (MGQDAFMELLRSMVGLSLCKIHLLLIAGSCLG). N-linked (GlcNAc...) asparagine glycosylation is found at Asn-86, Asn-130, and Asn-166. Ig-like C2-type domains follow at residues 150-234 (PMVQ…SDII) and 236-332 (PTIY…TRFT). 2 cysteine pairs are disulfide-bonded: Cys-171–Cys-220 and Cys-271–Cys-316. An N-linked (GlcNAc...) asparagine glycan is attached at Asn-321. The helical transmembrane segment at 353 to 373 (LASITGISLFLIISMCLLFLW) threads the bilayer. Topologically, residues 374 to 463 (KKYQPYKAIR…IPEQQQENTE (90 aa)) are cytoplasmic.

Poly-ADP-ribosylated (PARsylated) by tankyrase TNKS during late G2 and prophase, leading to translocation to mitotic centrosomes. Post-translationally, N-glycosylated.

It localises to the golgi apparatus membrane. Its subcellular location is the cytoplasm. The protein localises to the cytoskeleton. It is found in the spindle. The protein resides in the microtubule organizing center. It localises to the centrosome. Its subcellular location is the midbody. Required during prometaphase for centrosome maturation. Following poly-ADP-ribosylation (PARsylation) by TNKS, translocates from the Golgi apparatus to mitotic centrosomes and plays a key role in the formation of robust microtubules for prompt movement of chromosomes: anchors AKAP9/CG-NAP, a scaffold protein of the gamma-tubulin ring complex and promotes centrosome maturation. The sequence is that of HEPACAM family member 2 (Hepacam2) from Mus musculus (Mouse).